The sequence spans 293 residues: G1/S-specific cyclin-D3 (293 aa).

A Cyclin N-terminal domain is found at 27–152 (VLQSLLRLEE…LVLGKLKWDL (126 aa)). A disordered region spans residues 257–293 (REAAQTAPSPVPKAPGGSSSQGPSQTSTPTDVTAIHL). Phosphoserine is present on residues Ser-265 and Ser-280. Positions 271–286 (PGGSSSQGPSQTSTPT) are enriched in low complexity. Thr-284 is modified (phosphothreonine).

The protein belongs to the cyclin family. Cyclin D subfamily. As to quaternary structure, interacts with the CDK4 and CDK6 protein kinases to form a serine/threonine kinase holoenzyme complex. The cyclin subunit imparts substrate specificity to the complex. Interacts with ATF5. Interacts with EIF3K. Component of the ternary complex cyclin D/CDK4/CDKN1B required for nuclear translocation and modulation of CDK4-mediated kinase activity. Can form similar complexes with either CDKN1A or CDKN2A. Post-translationally, phosphorylation at Thr-284 by MAP kinases is required for ubiquitination and degradation by the DCX(AMBRA1) complex. In terms of processing, ubiquitinated by the DCX(AMBRA1) complex during the transition from G1 to S cell phase, leading to its degradation: ubiquitination is dependent on Thr-284 phosphorylation. The DCX(AMBRA1) complex represents the major regulator of CCND3 stability during the G1/S transition. Polyubiquitinated by the SCF(FBXL2) complex, leading to proteasomal degradation.

The protein localises to the nucleus. Its subcellular location is the cytoplasm. In terms of biological role, regulatory component of the cyclin D3-CDK4 (DC) complex that phosphorylates and inhibits members of the retinoblastoma (RB) protein family including RB1 and regulates the cell-cycle during G(1)/S transition. Phosphorylation of RB1 allows dissociation of the transcription factor E2F from the RB/E2F complex and the subsequent transcription of E2F target genes which are responsible for the progression through the G(1) phase. Hypophosphorylates RB1 in early G(1) phase. Cyclin D-CDK4 complexes are major integrators of various mitogenenic and antimitogenic signals. Component of the ternary complex, cyclin D3/CDK4/CDKN1B, required for nuclear translocation and activity of the cyclin D-CDK4 complex. Shows transcriptional coactivator activity with ATF5 independently of CDK4. This is G1/S-specific cyclin-D3 from Rattus norvegicus (Rat).